The following is an 83-amino-acid chain: UPF0512 protein G (83 aa).

It belongs to the UPF0512 family.

The protein is UPF0512 protein G of Dictyostelium discoideum (Social amoeba).